We begin with the raw amino-acid sequence, 241 residues long: Large ribosomal subunit protein uL3 (241 aa).

Disordered regions lie at residues S140–M162 and P217–A241. Position 151 is an N5-methylglutamine (Q151). Over residues A229–A241 the composition is skewed to low complexity.

This sequence belongs to the universal ribosomal protein uL3 family. In terms of assembly, part of the 50S ribosomal subunit. Forms a cluster with proteins L14 and L19. Methylated by PrmB.

In terms of biological role, one of the primary rRNA binding proteins, it binds directly near the 3'-end of the 23S rRNA, where it nucleates assembly of the 50S subunit. The sequence is that of Large ribosomal subunit protein uL3 from Methylobacterium radiotolerans (strain ATCC 27329 / DSM 1819 / JCM 2831 / NBRC 15690 / NCIMB 10815 / 0-1).